The chain runs to 257 residues: MKAHKIFWLNLAAIIIISIVVSGGMFLAMKWEQIHLKDGLKKVLSTYPIKNLETLYEIDGHDNPHYENNDQDTWYIESSYSVVGSDELLKEDRMLLKVDKNTHKITGEYDTTTNDRKNATDSTYKSYPVKVVNNKIVFTKDVKDPALKQKIENNQFLIQSGDLTSILNSNDLKVTHDPTTDYYNLSGKLSNDNPNVKQLKRRYNIPRNASTKVELKGMSDLKGNNHQDQKLYFYFSSPGKDQIIYKESLTYNKLSEH.

Residues 6–26 (IFWLNLAAIIIISIVVSGGMF) traverse the membrane as a helical segment.

This sequence belongs to the staphylococcal tandem lipoprotein family.

Its subcellular location is the cell membrane. This is an uncharacterized protein from Staphylococcus aureus (strain MSSA476).